Reading from the N-terminus, the 393-residue chain is 4-hydroxyphenylpyruvate dioxygenase (393 aa).

Thr-2 carries the post-translational modification N-acetylthreonine. 2 consecutive VOC domains span residues 18–149 (HFHS…LVEK) and 180–338 (IIDH…IFTK). Position 132 is an N6-succinyllysine (Lys-132). His-183 is a Fe cation binding site. 3 positions are modified to phosphoserine: Ser-211, Ser-226, and Ser-250. Residues His-266 and Glu-349 each coordinate Fe cation.

This sequence belongs to the 4HPPD family. As to quaternary structure, homodimer. Fe cation serves as cofactor.

The protein resides in the cytoplasm. Its subcellular location is the endoplasmic reticulum membrane. It is found in the golgi apparatus membrane. The catalysed reaction is 3-(4-hydroxyphenyl)pyruvate + O2 = homogentisate + CO2. The protein operates within amino-acid degradation; L-phenylalanine degradation; acetoacetate and fumarate from L-phenylalanine: step 3/6. Functionally, catalyzes the conversion of 4-hydroxyphenylpyruvic acid to homogentisic acid, one of the steps in tyrosine catabolism. The protein is 4-hydroxyphenylpyruvate dioxygenase (Hpd) of Rattus norvegicus (Rat).